Here is a 716-residue protein sequence, read N- to C-terminus: Myogenesis-regulating glycosidase (716 aa).

Polar residues predominate over residues 1-11; sequence MSQNLQETSQA. A disordered region spans residues 1–26; that stretch reads MSQNLQETSQAYPRHRPGSHAGPKSL. At 1 to 55 the chain is on the cytoplasmic side; it reads MSQNLQETSQAYPRHRPGSHAGPKSLKVTPRATMYTFLPDNFSPAKPKPTKELRP. A helical; Signal-anchor for type II membrane protein membrane pass occupies residues 56-76; sequence LLCSAVLGLLLVLAAVVAWCY. At 77-716 the chain is on the extracellular side; that stretch reads YSASLRKAER…DEVAYFTWAS (640 aa). N-linked (GlcNAc...) asparagine glycosylation is found at asparagine 239, asparagine 249, and asparagine 455. Catalysis depends on residues aspartate 462 and glutamate 465. Aspartate 527 functions as the Proton donor in the catalytic mechanism.

It belongs to the glycosyl hydrolase 31 family. In terms of assembly, interacts with IGF2; this interaction is required for IGF2 secretion. Expressed in brain, liver, spleen, skeletal muscle, heart, lung and kidney. High expression is observed in the cerebellum, specifically in astrocytes. Highly expressed in skeletal muscle (at protein level).

The protein resides in the nucleus membrane. The protein localises to the endoplasmic reticulum membrane. Putative glycosidase. Promotes myogenesis by activating AKT signaling through the maturation and secretion of IGF2. This Mus musculus (Mouse) protein is Myogenesis-regulating glycosidase (Myorg).